A 357-amino-acid chain; its full sequence is Alanine racemase (357 aa).

Residue K35 is the Proton acceptor; specific for D-alanine of the active site. K35 bears the N6-(pyridoxal phosphate)lysine mark. R131 provides a ligand contact to substrate. The active-site Proton acceptor; specific for L-alanine is Y256. M304 serves as a coordination point for substrate.

This sequence belongs to the alanine racemase family. Pyridoxal 5'-phosphate is required as a cofactor.

The catalysed reaction is L-alanine = D-alanine. It functions in the pathway amino-acid biosynthesis; D-alanine biosynthesis; D-alanine from L-alanine: step 1/1. Catalyzes the interconversion of L-alanine and D-alanine. May also act on other amino acids. This chain is Alanine racemase (alr), found in Legionella pneumophila (strain Paris).